Reading from the N-terminus, the 401-residue chain is Serine/threonine transporter SstT (401 aa).

Transmembrane regions (helical) follow at residues 17–37 (IGIG…ITVI), 40–60 (FGSL…LTLV), 78–98 (VICL…GASY), 138–158 (ALAT…GLAF), 179–199 (VVGW…FDTI), 212–232 (LLLL…NPLI), 295–315 (MAGA…TLGI), and 336–356 (ASGV…LFGI).

It belongs to the dicarboxylate/amino acid:cation symporter (DAACS) (TC 2.A.23) family.

It is found in the cell membrane. The enzyme catalyses L-serine(in) + Na(+)(in) = L-serine(out) + Na(+)(out). It carries out the reaction L-threonine(in) + Na(+)(in) = L-threonine(out) + Na(+)(out). Its function is as follows. Involved in the import of serine and threonine into the cell, with the concomitant import of sodium (symport system). In Streptococcus suis (strain 98HAH33), this protein is Serine/threonine transporter SstT.